Here is a 239-residue protein sequence, read N- to C-terminus: Tetrahydromethanopterin S-methyltransferase subunit A (239 aa).

Over 1–215 (MANKKSPAAT…EAAMIAKFNS (215 aa)) the chain is Cytoplasmic. His85 serves as a coordination point for 5-hydroxybenzimidazolylcob(I)amide. Residues 216-238 (GYYNGKIQGIAIGLFLSILVFSL) form a helical membrane-spanning segment. Position 239 (Leu239) is a topological domain, extracellular.

Belongs to the MtrA family. The complex is composed of 8 subunits; MtrA, MtrB, MtrC, MtrD, MtrE, MtrF, MtrG and MtrH. The cofactor is 5-hydroxybenzimidazolylcob(I)amide.

It is found in the cell membrane. It carries out the reaction 5-methyl-5,6,7,8-tetrahydromethanopterin + coenzyme M + 2 Na(+)(in) = 5,6,7,8-tetrahydromethanopterin + methyl-coenzyme M + 2 Na(+)(out). It functions in the pathway one-carbon metabolism; methanogenesis from CO(2); methyl-coenzyme M from 5,10-methylene-5,6,7,8-tetrahydromethanopterin: step 2/2. Part of a complex that catalyzes the formation of methyl-coenzyme M and tetrahydromethanopterin from coenzyme M and methyl-tetrahydromethanopterin. This is an energy-conserving, sodium-ion translocating step. The chain is Tetrahydromethanopterin S-methyltransferase subunit A from Methanococcus maripaludis (strain C7 / ATCC BAA-1331).